Reading from the N-terminus, the 1939-residue chain is MSASSDAEMAVFGEAAPFLRKSEKERIEAQNKPFDAKTSVFVAEPKASYVKSTIQSKEGGKVTVKTEGGATLTVREDQVFPMNPPKYDKIEDMAMMTHLHEPGVLYNLKERYAAWMIYTYSGLFCVTVNPYKWLPVYNPEVVAAYRGKKRQEAPPHIFSISDNAYQFMLTDRENQSILITGESGAGKTVNTKRVIQYFATIAVTGEKKKEEATSGKMQGTLEDQIISANPLLEAFGNAKTVRNDNSSRFGKFIRIHFGTTGKLASADIETYLLEKSRVTFQLKAERSYHIFYQITSNKKPDLIEMLLITTNPYDYAFVSQGEITVPSIDDQEELMATDSAIDILGFTPEEKVSIYKLTGAVMHYGNMKFKQKQREEQAEPDGTEVADKAAYLQNLNSADLLKALCYPRVKVGNEYVTKGQTVQQVYNAVGALAKAVYEKMFLWMVTRINQQLDTKQPRQYFIGVLDIAGFEIFDFNSLEQLCINFTNEKLQQFFNHHMFVLEQEEYKKEGIEWTFIDFGMDLAACIELIEKPLGIFSILEEECMFPKATDTSFKNKLYDQHLGKSANFQKPKVVKGKAEAHFSLIHYAGTVDYNIGGWLDKNKDPLNDTVVGLYQKSAMKTLASLFSTYASAEADSGAKKGAKKKGSSFQTVSALFRENLNKLMTNLRSTHPHFVRCIIPNETKTPGAMEHELVLHQLRCNGVLEGIRICRKGFPSRILYGDFKQRYKVLNASAIPEGQFIDSKKASEKLLASIDIDHTQYKFGHTKVFFKAGLLGLLEEMRDEKLSQIITRTQAVCRGFLMRVEYQKMLQRREALFCIQYNIRAFMNVKHWPWMRLFFKIKPLLKSAETEKEMATMKEEFQKTKDELAKSEAKRKELEEKMVTLLKEKNDLQLQVQSEADALADAEERCEQLIKNKIQLEAKIKEVTERAEDEEEINAELTAKKRKLEDECSELKKDIDDLELTLAKVEKEKHATENKVKNLTEEMAGLDETIAKLTKEKKALQEAHQQTLDDLQAEEDKVNTLTKAKTKLEQQVDDLEGSLEQERKLRMDLERAKRKLEGDLKLAQESTMDAENDKQQLDEKLKKKEFEISNLLSKIEDEQAIEIQLQKKIKELQARIEELEEEIEAERASRAKAEKQRSDLSRELEEISERLEEAGGATSAQIEMNKKREAEFQKMRRDLEEATLQHEATAATLRKKHADSVAELGEQIDNLQRVKQKLEKEKSEMKMEIDDLASNAETISKAKGNLEKMCRTLEDQVSELKTKEEEQQRLINDLTAQRARLQTEAGEYSRQLDEKDALVSQLSRSKQASTQQIEELKRQLEEETKAKNALAHALQSSRHDCDLLREQYEEEQEGKAELQRALSKANSEVAQWRTKYETDAIQRTEELEEAKKKLAQRLQEAEEHVEAVNAKCASLEKTKQRLQNEVEDLMLDVERSNAACAALDKKQRNFDKVLAEWKQKYEETQAELEASQKEARTLSTELFKVKNAYEESLDQVETLKRENKNLQQEISDLTEQIAEGGKQIHELEKIKKQVEQEKCDIQAALEEAEASLEHEEGKILRIQLELNQVKSEVDRKIAEKDEEIDQLKRNHIRVMESMQSTLDAEIRSRNDALRVKKKMEGDLNEMEIQLNHANRLAAESLRNYRNTQGILKDTQLHLDDALRGQEDLKEQLAMVERRANLLQAEIEELRATLEQTERSRKTAEQELLDASERVQLLHTQNTSLINTKKKLENDVSQLQSEVEEVIQESRNAEEKAKKAITDAAMMAEELKKEQDTSAHLERMKKNMEQTVKDLQHRLDEAEQLALKGGKKQIQKLEARVHELEGEVESEQKRNAEAVKGLRKHERRVKELTYQTEEDRKNVLRLQDLVDKLQAKVKSYKRQAEEAEEQSNTNLAKFRKLQHELEEAEERADIAESQVNKLRVKSREVHTKISAE.

In terms of domain architecture, Myosin N-terminal SH3-like spans 35 to 84 (DAKTSVFVAEPKASYVKSTIQSKEGGKVTVKTEGGATLTVREDQVFPMNP). 2 positions are modified to phosphothreonine: Thr-66 and Thr-71. The region spanning 88–783 (DKIEDMAMMT…LLGLLEEMRD (696 aa)) is the Myosin motor domain. At Lys-132 the chain carries N6,N6,N6-trimethyllysine. An ATP-binding site is contributed by 181–188 (GESGAGKT). The residue at position 391 (Tyr-391) is a Phosphotyrosine. Thr-421 is subject to Phosphothreonine. A Phosphotyrosine modification is found at Tyr-426. Ser-627 carries the phosphoserine modification. An actin-binding region spans residues 660 to 682 (LNKLMTNLRSTHPHFVRCIIPNE). His-758 is subject to Pros-methylhistidine. Residues 762–776 (KFGHTKVFFKAGLLG) form an actin-binding region. The IQ domain occupies 783-815 (DEKLSQIITRTQAVCRGFLMRVEYQKMLQRREA). Residues 844–1939 (LLKSAETEKE…REVHTKISAE (1096 aa)) are a coiled coil. Ser-1093, Ser-1097, Ser-1163, and Ser-1238 each carry phosphoserine. A Phosphothreonine modification is found at Thr-1242. Ser-1244 is subject to Phosphoserine. Thr-1256 bears the Phosphothreonine mark. At Ser-1262 the chain carries Phosphoserine. Residues Thr-1266 and Thr-1287 each carry the phosphothreonine modification. A phosphoserine mark is found at Ser-1293, Ser-1304, and Ser-1307. The residue at position 1465 (Tyr-1465) is a Phosphotyrosine. Thr-1468 carries the post-translational modification Phosphothreonine. Ser-1475 carries the post-translational modification Phosphoserine. Tyr-1493 is modified (phosphotyrosine). The residue at position 1496 (Ser-1496) is a Phosphoserine. A Phosphothreonine modification is found at Thr-1502. Ser-1515 carries the post-translational modification Phosphoserine. The residue at position 1518 (Thr-1518) is a Phosphothreonine. A phosphoserine mark is found at Ser-1555, Ser-1575, Ser-1601, Ser-1604, Ser-1715, and Ser-1727. At Thr-1731 the chain carries Phosphothreonine. Residue Ser-1740 is modified to Phosphoserine.

Belongs to the TRAFAC class myosin-kinesin ATPase superfamily. Myosin family. As to quaternary structure, muscle myosin is a hexameric protein that consists of 2 heavy chain subunits (MHC), 2 alkali light chain subunits (MLC) and 2 regulatory light chain subunits (MLC-2).

The protein resides in the cytoplasm. It localises to the myofibril. Muscle contraction. The sequence is that of Myosin-8 (MYH8) from Canis lupus familiaris (Dog).